The primary structure comprises 68 residues: Small ribosomal subunit protein bS21 (68 aa).

It belongs to the bacterial ribosomal protein bS21 family.

The chain is Small ribosomal subunit protein bS21 from Cereibacter sphaeroides (strain ATCC 17029 / ATH 2.4.9) (Rhodobacter sphaeroides).